The primary structure comprises 143 residues: Transcriptional regulator MraZ (143 aa).

SpoVT-AbrB domains lie at 5 to 47 and 76 to 119; these read EYEH…PRGV and AADM…SPRR.

The protein belongs to the MraZ family. As to quaternary structure, forms oligomers.

It is found in the cytoplasm. The protein resides in the nucleoid. The sequence is that of Transcriptional regulator MraZ from Roseiflexus castenholzii (strain DSM 13941 / HLO8).